A 603-amino-acid polypeptide reads, in one-letter code: MAMYTSIMLMTLASLALPIFATLVNPNKTHSYPNYVKTTMMYAFITSLIPTTLYIFSNQETTIWSWHWMMTQTLDLTLSFKLDYFSMMFIPIALFITWSIMEFSLWYMSSDPNINQFFKYLLIFLITMLILITANNLFQLFIGWEGVGIMSFLLISWWHARTDANTAAIQAVLYNRIGDIGLILAMVWFLLHYNSWDFQQMLALNPHPSPLPLMGLLLAAVGKSAQFGLHPWLPSAMEGPTPVSALLHSSTMVVAGVFLLIRFHPLMENDTLTQNLTLCLGAITTLFMAMCALTQNDIKKIVAFSTSSQLGLMMITIGINQPYLAFLHICTHAFFKAMLFICSGSIIHNLNNEQDIRKMGGLFKTMPLTSTSLIIGNLALTGIPFLTGFYSKDLIIEATSTSYTNAWALSITLIATSLTSAYSTRTILLTLTGQPRFPTLTNINENNPALLNPIKRLTTASMITGFLITNNIPPTSLPQPTMPLHLKLLALYMTALGFIITLDLTLMTNKLKVKTPPQTFKFSNMLGYFPTIAHRMIPHQNLLMSQNLALLLLDSMWLEKSMPKMISQTHITASTTVTAQKSMIKLYFLSFLIPLALALLLMV.

The next 14 helical transmembrane spans lie at 4–24, 36–56, 87–107, 122–142, 171–191, 211–233, 241–261, 272–292, 301–320, 325–347, 370–390, 406–422, 488–508, and 583–603; these read YTSI…ATLV, VKTT…LYIF, MMFI…SLWY, LIFL…QLFI, AVLY…WFLL, LPLM…HPWL, TPVS…FLLI, LTQN…AMCA, IVAF…IGIN, AFLH…GSII, STSL…TGFY, AWAL…TSAY, LLAL…TLMT, and MIKL…LLMV.

Belongs to the complex I subunit 5 family. As to quaternary structure, core subunit of respiratory chain NADH dehydrogenase (Complex I) which is composed of 45 different subunits.

It localises to the mitochondrion inner membrane. The catalysed reaction is a ubiquinone + NADH + 5 H(+)(in) = a ubiquinol + NAD(+) + 4 H(+)(out). In terms of biological role, core subunit of the mitochondrial membrane respiratory chain NADH dehydrogenase (Complex I) which catalyzes electron transfer from NADH through the respiratory chain, using ubiquinone as an electron acceptor. Essential for the catalytic activity and assembly of complex I. The polypeptide is NADH-ubiquinone oxidoreductase chain 5 (MT-ND5) (Papio hamadryas (Hamadryas baboon)).